A 423-amino-acid polypeptide reads, in one-letter code: F-box/LRR-repeat protein 2 (423 aa).

Residues 9–55 (GLINKKLPKELLLRIFSFLDIVTLCRCAQISKAWNILALDGSNWQRI) form the F-box domain. LRR repeat units lie at residues 61-87 (QTDV…SLRG), 88-113 (CIGV…NLNG), 114-139 (CTKI…DLTS), 140-165 (CVSI…NLSW), 166-191 (CDQI…LLRG), 192-217 (CTQL…NLQS), 218-243 (CSRV…CLSG), 244-269 (CGSL…EAAR), 270-295 (CSHL…DLEE), 296-321 (CILI…SLSH), 322-350 (CELI…ELDN), 351-375 (CLLI…ELYD), and 376-401 (CQQV…AYFA). Residues 80–90 (LRKLSLRGCIG) are interaction with Calmodulin. A Glycyl lysine isopeptide (Lys-Gly) (interchain with G-Cter in ubiquitin) cross-link involves residue Lys-201. Thr-404 carries the post-translational modification Phosphothreonine. Cys-420 carries S-geranylgeranyl cysteine lipidation. Residues 420–423 (CVIL) carry the CAAX motif motif.

In terms of assembly, part of the SCF (SKP1-CUL1-F-box) E3 ubiquitin-protein ligase complex SCF(FBXL2) composed of CUL1, SKP1, RBX1 and FBXL2. Interacts with calmodulin; may antagonize substrate ubiquitination by SCF(FBXL2). May interact with PIK3R1. Interacts with PTPN13. Post-translationally, phosphorylated by GSK-beta (GSK3B), promoting recognition by FBXO3, leading to its ubiquitination by the SCF(FBXO3) complex. Ubiquitinated at Lys-201 by the SCF(FBXO3) complex in response to lipopolysaccharide (LPS), leading to its degradation by the proteasome.

Its subcellular location is the membrane. Its pathway is protein modification; protein ubiquitination. Calcium-activated substrate recognition component of the SCF (SKP1-cullin-F-box protein) E3 ubiquitin-protein ligase complex, SCF(FBXL2), which mediates the ubiquitination and subsequent proteasomal degradation of target proteins. Unlike many F-box proteins, FBXL2 does not seem to target phosphodegron within its substrates but rather calmodulin-binding motifs and is thereby antagonized by calmodulin. This is the case for the cyclins CCND2 and CCND3 which polyubiquitination and subsequent degradation are inhibited by calmodulin. Through CCND2 and CCND3 degradation induces cell-cycle arrest in G(0). SCF(FBXL2) also mediates PIK3R2 ubiquitination and proteasomal degradation thereby regulating phosphatidylinositol 3-kinase signaling and autophagy. PCYT1A monoubiquitination by SCF(FBXL2) and subsequent degradation regulates synthesis of phosphatidylcholine, which is utilized for formation of membranes and of pulmonary surfactant. The SCF(FBXL2) complex acts as a regulator of inflammation by mediating ubiquitination and degradation of TRAF proteins (TRAF1, TRAF2, TRAF3, TRAF4, TRAF5 and TRAF6). The SCF(FBXL2) complex acts as a negative regulator of the NLRP3 inflammasome by mediating ubiquitination and degradation of NLRP3. This is F-box/LRR-repeat protein 2 from Bos taurus (Bovine).